The following is a 64-amino-acid chain: Large ribosomal subunit protein uL30 (64 aa).

It belongs to the universal ribosomal protein uL30 family. In terms of assembly, part of the 50S ribosomal subunit.

This is Large ribosomal subunit protein uL30 from Bradyrhizobium diazoefficiens (strain JCM 10833 / BCRC 13528 / IAM 13628 / NBRC 14792 / USDA 110).